The primary structure comprises 165 residues: Deoxyuridine 5'-triphosphate nucleotidohydrolase (165 aa).

This sequence belongs to the dUTPase family. As to quaternary structure, homotrimer. Mg(2+) serves as cofactor.

It localises to the host cytoplasm. The protein localises to the virion. The enzyme catalyses dUTP + H2O = dUMP + diphosphate + H(+). Its function is as follows. The viral dUTPase may play a role in lowering the dUTP concentration in natural infections to minimize misincorporation of deoxyuridine into the viral DNA and ensure the fidelity of genome replication. This is Deoxyuridine 5'-triphosphate nucleotidohydrolase from Ornithodoros (relapsing fever ticks).